We begin with the raw amino-acid sequence, 451 residues long: Phosphoglucosamine mutase (451 aa).

S107 acts as the Phosphoserine intermediate in catalysis. S107, D246, D248, and D250 together coordinate Mg(2+). Phosphoserine is present on S107.

Belongs to the phosphohexose mutase family. Requires Mg(2+) as cofactor. Activated by phosphorylation.

The catalysed reaction is alpha-D-glucosamine 1-phosphate = D-glucosamine 6-phosphate. Functionally, catalyzes the conversion of glucosamine-6-phosphate to glucosamine-1-phosphate. The polypeptide is Phosphoglucosamine mutase (Burkholderia ambifaria (strain ATCC BAA-244 / DSM 16087 / CCUG 44356 / LMG 19182 / AMMD) (Burkholderia cepacia (strain AMMD))).